A 591-amino-acid chain; its full sequence is Inactive metallocarboxypeptidase ECM14 (591 aa).

Residues 1-21 (MRLFSHLAVLAILACAVPITA) form the signal peptide. A propeptide spanning residues 22–175 (IPSFLSNSYP…QTIYESYPSS (154 aa)) is cleaved from the precursor. The Peptidase M14 domain occupies 203–523 (DYQPFSVIVP…NAVMVLGRFL (321 aa)). Zn(2+) contacts are provided by His-265 and Glu-268. Substrate contacts are provided by residues 265–268 (HARE), Arg-323, and 340–341 (DR). Cys-334 and Cys-357 are joined by a disulfide. N-linked (GlcNAc...) asparagine glycans are attached at residues Asn-350, Asn-381, and Asn-386. Zn(2+) is bound at residue His-397. 398–399 (SY) serves as a coordination point for substrate. A disordered region spans residues 533-591 (DWEDESQRPKADEDDIPSENELDENDDSWIPYDYRNHDDQNEGEGYDNDEWGFRRRRKR). Acidic residues-rich tracts occupy residues 544 to 559 (DEDDIPSENELDENDD) and 573 to 582 (NEGEGYDNDE).

It belongs to the peptidase M14 family. The cofactor is Zn(2+).

Its subcellular location is the vacuole. It is found in the secreted. In terms of biological role, inactive carboxypeptidase that may play a role in cell wall organization and biogenesis. The sequence is that of Inactive metallocarboxypeptidase ECM14 (ECM14) from Paracoccidioides brasiliensis (strain Pb18).